Here is an 85-residue protein sequence, read N- to C-terminus: ATP synthase subunit c (85 aa).

The next 2 helical transmembrane spans lie at 10-30 and 53-73; these read IAVA…FAIL and FIVA…ALFF.

It belongs to the ATPase C chain family. As to quaternary structure, F-type ATPases have 2 components, F(1) - the catalytic core - and F(0) - the membrane proton channel. F(1) has five subunits: alpha(3), beta(3), gamma(1), delta(1), epsilon(1). F(0) has three main subunits: a(1), b(2) and c(10-14). The alpha and beta chains form an alternating ring which encloses part of the gamma chain. F(1) is attached to F(0) by a central stalk formed by the gamma and epsilon chains, while a peripheral stalk is formed by the delta and b chains.

It localises to the cell inner membrane. F(1)F(0) ATP synthase produces ATP from ADP in the presence of a proton or sodium gradient. F-type ATPases consist of two structural domains, F(1) containing the extramembraneous catalytic core and F(0) containing the membrane proton channel, linked together by a central stalk and a peripheral stalk. During catalysis, ATP synthesis in the catalytic domain of F(1) is coupled via a rotary mechanism of the central stalk subunits to proton translocation. Its function is as follows. Key component of the F(0) channel; it plays a direct role in translocation across the membrane. A homomeric c-ring of between 10-14 subunits forms the central stalk rotor element with the F(1) delta and epsilon subunits. In Shewanella halifaxensis (strain HAW-EB4), this protein is ATP synthase subunit c.